The chain runs to 392 residues: S-adenosylmethionine synthase (392 aa).

An ATP-binding site is contributed by H22. Residue D24 coordinates Mg(2+). K(+) is bound at residue E50. Residues E63 and Q106 each coordinate L-methionine. Residues 106-116 (QSPDITQGVTL) form a flexible loop region. ATP is bound by residues 170-172 (DGK), 236-237 (KF), D245, 251-252 (RK), A268, and K272. An L-methionine-binding site is contributed by D245. K276 is an L-methionine binding site.

The protein belongs to the AdoMet synthase family. Homotetramer; dimer of dimers. Mg(2+) serves as cofactor. It depends on K(+) as a cofactor.

Its subcellular location is the cytoplasm. It catalyses the reaction L-methionine + ATP + H2O = S-adenosyl-L-methionine + phosphate + diphosphate. Its pathway is amino-acid biosynthesis; S-adenosyl-L-methionine biosynthesis; S-adenosyl-L-methionine from L-methionine: step 1/1. In terms of biological role, catalyzes the formation of S-adenosylmethionine (AdoMet) from methionine and ATP. The overall synthetic reaction is composed of two sequential steps, AdoMet formation and the subsequent tripolyphosphate hydrolysis which occurs prior to release of AdoMet from the enzyme. The chain is S-adenosylmethionine synthase from Sulfurimonas denitrificans (strain ATCC 33889 / DSM 1251) (Thiomicrospira denitrificans (strain ATCC 33889 / DSM 1251)).